A 203-amino-acid polypeptide reads, in one-letter code: MSEQRQNPEQEVELNEDLAKMEADVEAAVQAAEEHAEQEQSPEAEIAMLYAELEVAKQTIADQKDGVVRAAADVENMRRRAAQDVEKAHKFALEKFANELLPVIDNLERAIEFSDKENETLKPVLEGISMTVKSFNDAVAKFGVEIVNPQGEQFNPEFHQAMSIQPSNDVSPNTVLAVMQKGYTLNGRLLRPAMVMVSKAADA.

Belongs to the GrpE family. Homodimer.

It is found in the cytoplasm. Participates actively in the response to hyperosmotic and heat shock by preventing the aggregation of stress-denatured proteins, in association with DnaK and GrpE. It is the nucleotide exchange factor for DnaK and may function as a thermosensor. Unfolded proteins bind initially to DnaJ; upon interaction with the DnaJ-bound protein, DnaK hydrolyzes its bound ATP, resulting in the formation of a stable complex. GrpE releases ADP from DnaK; ATP binding to DnaK triggers the release of the substrate protein, thus completing the reaction cycle. Several rounds of ATP-dependent interactions between DnaJ, DnaK and GrpE are required for fully efficient folding. The sequence is that of Protein GrpE from Pseudoalteromonas translucida (strain TAC 125).